Reading from the N-terminus, the 313-residue chain is Olfactory receptor 8C8 (313 aa).

Residues 1–27 (MMQITMENKSSVSEFILMGLTDQPELQ) lie on the Extracellular side of the membrane. N-linked (GlcNAc...) asparagine glycosylation occurs at asparagine 8. The chain crosses the membrane as a helical span at residues 28-48 (LPLFVLFLMNYTATVMGNLTL). The Cytoplasmic segment spans residues 49–59 (MNLICLNSNLH). Residues 60-80 (TPMYFFLFNLSFIDFCYSMVF) form a helical membrane-spanning segment. The Extracellular segment spans residues 81–96 (TPKMLMSFILEKNTIS). The chain crosses the membrane as a helical span at residues 97–117 (FGGCMAQLFFFLFFVNSESYV). The cysteines at positions 100 and 192 are disulfide-linked. Over 118–136 (LTAMAYDRYVAICKPLTYK) the chain is Cytoplasmic. A helical transmembrane segment spans residues 137–157 (VIMSPKICCLLIFSSYLMGFA). The Extracellular segment spans residues 158 to 208 (SAMAHTGCMIRLSFCDSNIINHYMCDIFPLLPLSCSSTYVNELMSSVVVGS). The helical transmembrane segment at 209-229 (AIILCCLIILISYAMILFNII) threads the bilayer. At 230 to 239 (HMSSGKGWSK) the chain is on the cytoplasmic side. A helical membrane pass occupies residues 240–260 (ALGTCGSHIITVSLFYGSGLL). Residues 261 to 274 (AYVKPSSAKTVGQG) are Extracellular-facing. A helical transmembrane segment spans residues 275–295 (KFFSVFYTLLVPMLNPLIYSL). The Cytoplasmic segment spans residues 296 to 313 (RNKDVKLAVKKTWKRITS).

It belongs to the G-protein coupled receptor 1 family. Expressed in neurons in the olfactory epithelium.

It is found in the cell membrane. Functionally, potential odorant receptor. This Mus musculus (Mouse) protein is Olfactory receptor 8C8.